We begin with the raw amino-acid sequence, 282 residues long: Putative hydrolase Bcenmc03_4750 (282 aa).

Residues Glu124, Glu126, and Asp155 each contribute to the Mg(2+) site.

It belongs to the FAH family. Mg(2+) is required as a cofactor.

This is Putative hydrolase Bcenmc03_4750 from Burkholderia orbicola (strain MC0-3).